The primary structure comprises 801 residues: Protocadherin beta-8 (801 aa).

Residues 1 to 29 form the signal peptide; it reads MEASGKLICRQRQVLFSFLLLGLSLAGAA. Over 30–691 the chain is Extracellular; sequence EPRSYSVVEE…GQADSLTVYL (662 aa). 5 consecutive Cadherin domains span residues 36–134, 139–243, 248–348, 353–452, and 457–562; these read VVEE…SPVF, MLVK…APEF, YRVQ…APEV, FTSP…APAF, and YTLF…SPFV. Cysteine 97 and cysteine 103 form a disulfide bridge. Residues asparagine 419 and asparagine 437 are each glycosylated (N-linked (GlcNAc...) asparagine). Asparagine 568 carries an N-linked (GlcNAc...) asparagine glycan. In terms of domain architecture, Cadherin 6 spans 569-672; the sequence is SSAPCTELVP…LVDGFSQPYL (104 aa). A helical transmembrane segment spans residues 692–710; that stretch reads VVALASVSSLFLFSVLLFV. At 711 to 801 the chain is on the cytoplasmic side; that stretch reads AVRLCRRSRA…NGFGFSLQLK (91 aa).

In terms of assembly, forms homodimers in trans (molecules expressed by two different cells). Forms promiscuous heterodimers in cis (at the plasma membrane of the same cell) with other protocadherins.

The protein localises to the cell membrane. Functionally, calcium-dependent cell-adhesion protein involved in cells self-recognition and non-self discrimination. Thereby, it is involved in the establishment and maintenance of specific neuronal connections in the brain. The polypeptide is Protocadherin beta-8 (Pan troglodytes (Chimpanzee)).